A 92-amino-acid polypeptide reads, in one-letter code: DNA-directed RNA polymerase subunit omega (92 aa).

It belongs to the RNA polymerase subunit omega family. In terms of assembly, the RNAP catalytic core consists of 2 alpha, 1 beta, 1 beta' and 1 omega subunit. When a sigma factor is associated with the core the holoenzyme is formed, which can initiate transcription.

It carries out the reaction RNA(n) + a ribonucleoside 5'-triphosphate = RNA(n+1) + diphosphate. Its function is as follows. Promotes RNA polymerase assembly. Latches the N- and C-terminal regions of the beta' subunit thereby facilitating its interaction with the beta and alpha subunits. In Shewanella amazonensis (strain ATCC BAA-1098 / SB2B), this protein is DNA-directed RNA polymerase subunit omega.